Consider the following 61-residue polypeptide: Large ribosomal subunit protein bL32 (61 aa).

It belongs to the bacterial ribosomal protein bL32 family.

The polypeptide is Large ribosomal subunit protein bL32 (Cytophaga hutchinsonii (strain ATCC 33406 / DSM 1761 / CIP 103989 / NBRC 15051 / NCIMB 9469 / D465)).